The chain runs to 544 residues: Probable protein kinase UbiB (544 aa).

The region spanning 123–501 (DFDIKPLASA…KRQQGTGKFL (379 aa)) is the Protein kinase domain. Residues 129–137 (LASASIAQV) and K152 each bind ATP. D287 functions as the Proton acceptor in the catalytic mechanism. 2 helical membrane passes run 496–516 (GTGK…AIWI) and 519–539 (QLEP…LLSW).

This sequence belongs to the ABC1 family. UbiB subfamily.

Its subcellular location is the cell inner membrane. The protein operates within cofactor biosynthesis; ubiquinone biosynthesis [regulation]. In terms of biological role, is probably a protein kinase regulator of UbiI activity which is involved in aerobic coenzyme Q (ubiquinone) biosynthesis. The protein is Probable protein kinase UbiB of Vibrio cholerae serotype O1 (strain ATCC 39541 / Classical Ogawa 395 / O395).